The following is a 429-amino-acid chain: Cyclin-B2-1 (429 aa).

The protein belongs to the cyclin family. Cyclin AB subfamily. Interacts with CDC20-1 and CDC20-2. In terms of tissue distribution, expressed in roots, stems, leaves, flowers and siliques.

The chain is Cyclin-B2-1 (CYCB2-1) from Arabidopsis thaliana (Mouse-ear cress).